Reading from the N-terminus, the 573-residue chain is MRTENTATLNLIWGALILEELARLGVQHVCMAPGSRSTPLTLAAAQQTKLQRHLHFDERGLGFMALGLAKASRAPVAIITTSGTAVANLYPAIVEAWLTHVPLIVLSGDRPPELLGCGANQAIVQPGIFANYATQVNLPTPDAHIAPQALLTTVDEAVANQTRPVHINCMYREPLYPSELSGVILDTESPYLKPLQTWLQLARPYTQYGKCKQLSSPSDDAIMRFVHGKGVIVVGTLTPEQDPQQLIALSQKIGWPLLTDAQSQLRQHPAAIGNIDQLLQHPRARNLLQEADRVLVFGGRLLSKRVIGYLAEQNWHSYWQVLPEQDRLDPSHNAKHIWHANAEQFAALNWYRSSSANWANTLITYNDELHNLFVRNIDQGEFGEAQVIRAIANTRPLEQQLFIGNSLPVRLYDMYAPVSCCTATTYTNRGASGIDGLLATACGIAAHKGKATSLIIGDLSQLHDLNSLAIAKGLTSPLVIVILNNDGGNIFNLLPVPNEQVRSDYYRLSHGLEFGYAAAMFNLPYNQVDNLADFQDSYNEALDFQGASIIEVNVSQNQASDQIAALNLWVKQS.

It belongs to the TPP enzyme family. MenD subfamily. As to quaternary structure, homodimer. The cofactor is Mg(2+). Mn(2+) is required as a cofactor. It depends on thiamine diphosphate as a cofactor.

It carries out the reaction isochorismate + 2-oxoglutarate + H(+) = 5-enolpyruvoyl-6-hydroxy-2-succinyl-cyclohex-3-ene-1-carboxylate + CO2. Its pathway is quinol/quinone metabolism; 1,4-dihydroxy-2-naphthoate biosynthesis; 1,4-dihydroxy-2-naphthoate from chorismate: step 2/7. It functions in the pathway quinol/quinone metabolism; menaquinone biosynthesis. Functionally, catalyzes the thiamine diphosphate-dependent decarboxylation of 2-oxoglutarate and the subsequent addition of the resulting succinic semialdehyde-thiamine pyrophosphate anion to isochorismate to yield 2-succinyl-5-enolpyruvyl-6-hydroxy-3-cyclohexene-1-carboxylate (SEPHCHC). In Shewanella baltica (strain OS195), this protein is 2-succinyl-5-enolpyruvyl-6-hydroxy-3-cyclohexene-1-carboxylate synthase.